A 400-amino-acid chain; its full sequence is Phosphoglycerate kinase (400 aa).

Substrate is bound by residues 23–25 (DLN), R38, 61–64 (HFGR), R120, and R153. Residues K203, E325, and 355-358 (GGDT) each bind ATP.

Belongs to the phosphoglycerate kinase family. As to quaternary structure, monomer.

The protein resides in the cytoplasm. The enzyme catalyses (2R)-3-phosphoglycerate + ATP = (2R)-3-phospho-glyceroyl phosphate + ADP. Its pathway is carbohydrate degradation; glycolysis; pyruvate from D-glyceraldehyde 3-phosphate: step 2/5. The polypeptide is Phosphoglycerate kinase (Rhizobium leguminosarum bv. trifolii (strain WSM2304)).